The primary structure comprises 80 residues: Exodeoxyribonuclease 7 small subunit (80 aa).

The protein belongs to the XseB family. In terms of assembly, heterooligomer composed of large and small subunits.

The protein localises to the cytoplasm. It catalyses the reaction Exonucleolytic cleavage in either 5'- to 3'- or 3'- to 5'-direction to yield nucleoside 5'-phosphates.. Its function is as follows. Bidirectionally degrades single-stranded DNA into large acid-insoluble oligonucleotides, which are then degraded further into small acid-soluble oligonucleotides. This is Exodeoxyribonuclease 7 small subunit from Pseudomonas paraeruginosa (strain DSM 24068 / PA7) (Pseudomonas aeruginosa (strain PA7)).